A 226-amino-acid chain; its full sequence is 2-C-methyl-D-erythritol 4-phosphate cytidylyltransferase (226 aa).

This sequence belongs to the IspD/TarI cytidylyltransferase family. IspD subfamily.

The enzyme catalyses 2-C-methyl-D-erythritol 4-phosphate + CTP + H(+) = 4-CDP-2-C-methyl-D-erythritol + diphosphate. It participates in isoprenoid biosynthesis; isopentenyl diphosphate biosynthesis via DXP pathway; isopentenyl diphosphate from 1-deoxy-D-xylulose 5-phosphate: step 2/6. Functionally, catalyzes the formation of 4-diphosphocytidyl-2-C-methyl-D-erythritol from CTP and 2-C-methyl-D-erythritol 4-phosphate (MEP). The polypeptide is 2-C-methyl-D-erythritol 4-phosphate cytidylyltransferase (Parasynechococcus marenigrum (strain WH8102)).